The primary structure comprises 89 residues: Cell division topological specificity factor (89 aa).

Belongs to the MinE family.

In terms of biological role, prevents the cell division inhibition by proteins MinC and MinD at internal division sites while permitting inhibition at polar sites. This ensures cell division at the proper site by restricting the formation of a division septum at the midpoint of the long axis of the cell. In Yersinia pestis bv. Antiqua (strain Angola), this protein is Cell division topological specificity factor.